Here is a 336-residue protein sequence, read N- to C-terminus: Nuclear envelope-associated protein 3 (336 aa).

Coiled coils occupy residues 14-87 and 128-261; these read LKDL…IRAS and VLSK…LKKK. The Bipartite nuclear localization signal motif lies at 240–261; it reads KTKELEDQVENQRRIDQELKKK. The chain crosses the membrane as a helical span at residues 313–330; the sequence is LWDKSGFKIVVSMSMLIL.

In terms of assembly, forms homomers and heteromers with NEAP1 and NEAP2. Interacts with SUN1 and SUN2.

The protein localises to the nucleus inner membrane. Its subcellular location is the nucleus. It is found in the nucleoplasm. The chain is Nuclear envelope-associated protein 3 from Arabidopsis thaliana (Mouse-ear cress).